We begin with the raw amino-acid sequence, 407 residues long: Putative D-cysteine desulfhydrase 2, mitochondrial (407 aa).

The transit peptide at 1–34 (MRPSPALAGGGRTVANLLSATEWMLPSPATQVHT) directs the protein to the mitochondrion. Residues 39 to 72 (PSHSPPSPPHHFAFSNLTTAPKRNGGKGEEEGRP) form a disordered region. Residue Lys90 is modified to N6-(pyridoxal phosphate)lysine.

It belongs to the ACC deaminase/D-cysteine desulfhydrase family. Requires pyridoxal 5'-phosphate as cofactor.

The protein localises to the mitochondrion. The catalysed reaction is D-cysteine + H2O = hydrogen sulfide + pyruvate + NH4(+) + H(+). Catalyzes the production of hydrogen sulfide (H2S) from cysteine. The polypeptide is Putative D-cysteine desulfhydrase 2, mitochondrial (Oryza sativa subsp. japonica (Rice)).